We begin with the raw amino-acid sequence, 404 residues long: Odorant receptor 67c (404 aa).

The Cytoplasmic segment spans residues 1-45 (METAKDNTARTFMELMRVPVQFYRTIGEDIYAHRSTNPLKSLLFK). A helical membrane pass occupies residues 46–66 (IYLYAGFINFNLLVIGELVFF). At 67–79 (YNSIQDFETIRLA) the chain is on the extracellular side. Residues 80–100 (IAVAPCIGFSLVADFKQAAMI) form a helical membrane-spanning segment. Topologically, residues 101–139 (RGKKTLIMLLDDLENMHPKTLAKQMEYKLPDFEKTMKRV) are cytoplasmic. A helical membrane pass occupies residues 140–160 (INIFTFLCLAYTTTFSFYPAI). Over 161–204 (KASVKFNFLGYDTFDRNFGFLIWFPFDATRNNLIYWIMYWDIAH) the chain is Extracellular. A helical membrane pass occupies residues 205-225 (GAYLAGIAFLCADLLLVVVIT). At 226-277 (QICMHFNYISMRLEDHPCNSNEDKENIEFLIGIIRYHDKCLKLCEHVNDLYS) the chain is on the cytoplasmic side. A helical membrane pass occupies residues 278–298 (FSLLLNFLMASMQICFIAFQV). At 299-304 (TESTVE) the chain is on the extracellular side. Residues 305 to 326 (VIIIYCIFLMTSMVQVFMVCYY) traverse the membrane as a helical segment. At 327–373 (GDTLIAASLKVGDAAYNQKWFQCSKSYCTMLKLLIMRSQKPASIRPP) the chain is on the cytoplasmic side. A helical transmembrane segment spans residues 374–394 (TFPPISLVTYMKVISMSYQFF). Residues 395 to 404 (ALLRTTYSNN) are Extracellular-facing.

This sequence belongs to the insect chemoreceptor superfamily. Heteromeric odorant receptor channel (TC 1.A.69) family. Or49a subfamily. In terms of assembly, interacts with Orco. Complexes exist early in the endomembrane system in olfactory sensory neurons (OSNs), coupling these complexes to the conserved ciliary trafficking pathway. In terms of tissue distribution, expressed in olfactory sensory neurons in the antenna.

It localises to the cell membrane. In terms of biological role, odorant receptor which mediates acceptance or avoidance behavior, depending on its substrates. The odorant receptor repertoire encodes a large collection of odor stimuli that vary widely in identity, intensity, and duration. May form a complex with Orco to form odorant-sensing units, providing sensitive and prolonged odorant signaling and calcium permeability. The polypeptide is Odorant receptor 67c (Or67c) (Drosophila melanogaster (Fruit fly)).